The chain runs to 182 residues: Plasmolipin (182 aa).

The segment at 1–20 (MAEFPSKVSTRTSSPAQGVG) is disordered. The Cytoplasmic segment spans residues 1–35 (MAEFPSKVSTRTSSPAQGVGASVSAMRPDLGFVRS). Over residues 7 to 16 (KVSTRTSSPA) the composition is skewed to polar residues. The residue at position 9 (S9) is a Phosphoserine. An MARVEL domain is found at 32–166 (FVRSALGVLA…SAFFSFQAWR (135 aa)). Residues 36-56 (ALGVLALLQLVLGLLVWALIA) form a helical membrane-spanning segment. The Extracellular segment spans residues 57–68 (DTPYHLYPAYGW). Residues 69 to 89 (VMFVAVFLWLVTIVFFIIYLF) traverse the membrane as a helical segment. Residues 90–99 (QLHMKLYMVP) lie on the Cytoplasmic side of the membrane. Residues 100–120 (WPLVLLVFFVAATVLYITAFV) traverse the membrane as a helical segment. The Extracellular portion of the chain corresponds to 121–141 (ACAAAVDLTSLRGSRPYNQRS). The chain crosses the membrane as a helical span at residues 142–162 (AASFFACLVMIAYGLSAFFSF). The Cytoplasmic segment spans residues 163 to 182 (QAWRGVGSNAATSQMAGGYS).

The protein belongs to the MAL family. As to quaternary structure, forms oligomers. Phosphorylated. As to expression, detected to the sciatic nerve, brain and kidney. In the sciatic nerve, found in Schwann cells; in the brain, in developing oligodendrocytes, especially of the corpus callosum, of cortical white matter, in the optic nerve and in the stratum radiatum and stratum oriens of the hippocampus. In kidney, segregated to the apical surface of renal tubular epithelia.

It localises to the cell membrane. The protein localises to the myelin membrane. The protein resides in the apical cell membrane. Functionally, main component of the myelin sheath that plays an important role in myelin membrane biogenesis and myelination. Plays an essential function in apical endocytosis. Regulates epithelial development through the regulation of apical endocytosis. Part of the intracellular machinery that mediates basolateral-to-apical transport of ICAM-1, an essential adhesion receptor in epithelial cells, from the subapical compartment in hepatic epithelial cells. The chain is Plasmolipin (Pllp) from Rattus norvegicus (Rat).